Reading from the N-terminus, the 358-residue chain is DNA replication and repair protein RecF (358 aa).

An ATP-binding site is contributed by 33–40 (GENGAGKT).

Belongs to the RecF family.

Its subcellular location is the cytoplasm. Functionally, the RecF protein is involved in DNA metabolism; it is required for DNA replication and normal SOS inducibility. RecF binds preferentially to single-stranded, linear DNA. It also seems to bind ATP. The protein is DNA replication and repair protein RecF of Deinococcus geothermalis (strain DSM 11300 / CIP 105573 / AG-3a).